Here is a 204-residue protein sequence, read N- to C-terminus: Probable nicotinate-nucleotide adenylyltransferase (204 aa).

Belongs to the NadD family.

The catalysed reaction is nicotinate beta-D-ribonucleotide + ATP + H(+) = deamido-NAD(+) + diphosphate. The protein operates within cofactor biosynthesis; NAD(+) biosynthesis; deamido-NAD(+) from nicotinate D-ribonucleotide: step 1/1. Functionally, catalyzes the reversible adenylation of nicotinate mononucleotide (NaMN) to nicotinic acid adenine dinucleotide (NaAD). This is Probable nicotinate-nucleotide adenylyltransferase from Dehalococcoides mccartyi (strain ATCC BAA-2266 / KCTC 15142 / 195) (Dehalococcoides ethenogenes (strain 195)).